Here is a 330-residue protein sequence, read N- to C-terminus: 4-hydroxythreonine-4-phosphate dehydrogenase (330 aa).

Positions 136 and 137 each coordinate substrate. Residues histidine 166, histidine 211, and histidine 266 each contribute to the a divalent metal cation site. The substrate site is built by lysine 274, asparagine 283, and arginine 292.

It belongs to the PdxA family. As to quaternary structure, homodimer. Zn(2+) is required as a cofactor. Requires Mg(2+) as cofactor. The cofactor is Co(2+).

It localises to the cytoplasm. The enzyme catalyses 4-(phosphooxy)-L-threonine + NAD(+) = 3-amino-2-oxopropyl phosphate + CO2 + NADH. It participates in cofactor biosynthesis; pyridoxine 5'-phosphate biosynthesis; pyridoxine 5'-phosphate from D-erythrose 4-phosphate: step 4/5. Catalyzes the NAD(P)-dependent oxidation of 4-(phosphooxy)-L-threonine (HTP) into 2-amino-3-oxo-4-(phosphooxy)butyric acid which spontaneously decarboxylates to form 3-amino-2-oxopropyl phosphate (AHAP). This is 4-hydroxythreonine-4-phosphate dehydrogenase from Sodalis glossinidius (strain morsitans).